We begin with the raw amino-acid sequence, 546 residues long: CTP synthase (546 aa).

Residues 1 to 266 are amidoligase domain; that stretch reads MTTNYIFVTG…DELVCKRFGI (266 aa). Position 14 (S14) interacts with CTP. S14 serves as a coordination point for UTP. Residues 15 to 20 and D72 each bind ATP; that span reads SLGKGI. Residues D72 and E140 each contribute to the Mg(2+) site. Residues 147–149, 187–192, and K223 contribute to the CTP site; these read DIE and KTKPTQ. Residues 187-192 and K223 contribute to the UTP site; that span reads KTKPTQ. 239–241 is a binding site for ATP; sequence RDV. Residues 291–542 enclose the Glutamine amidotransferase type-1 domain; that stretch reads TIGMVGKYIE…VKAAGEFQRG (252 aa). G352 contacts L-glutamine. The Nucleophile; for glutamine hydrolysis role is filled by C379. Residues 380–383, E403, and R470 contribute to the L-glutamine site; that span reads LGMQ. Active-site residues include H515 and E517.

The protein belongs to the CTP synthase family. As to quaternary structure, homotetramer.

It catalyses the reaction UTP + L-glutamine + ATP + H2O = CTP + L-glutamate + ADP + phosphate + 2 H(+). The enzyme catalyses L-glutamine + H2O = L-glutamate + NH4(+). It carries out the reaction UTP + NH4(+) + ATP = CTP + ADP + phosphate + 2 H(+). It functions in the pathway pyrimidine metabolism; CTP biosynthesis via de novo pathway; CTP from UDP: step 2/2. With respect to regulation, allosterically activated by GTP, when glutamine is the substrate; GTP has no effect on the reaction when ammonia is the substrate. The allosteric effector GTP functions by stabilizing the protein conformation that binds the tetrahedral intermediate(s) formed during glutamine hydrolysis. Inhibited by the product CTP, via allosteric rather than competitive inhibition. Functionally, catalyzes the ATP-dependent amination of UTP to CTP with either L-glutamine or ammonia as the source of nitrogen. Regulates intracellular CTP levels through interactions with the four ribonucleotide triphosphates. The protein is CTP synthase of Vibrio atlanticus (strain LGP32) (Vibrio splendidus (strain Mel32)).